The chain runs to 334 residues: Formylmethanofuran--tetrahydromethanopterin formyltransferase (334 aa).

Belongs to the FTR family. In terms of assembly, homotetramer.

The protein resides in the cytoplasm. It catalyses the reaction N-formylmethanofuran + 5,6,7,8-tetrahydromethanopterin + H(+) = N(5)-formyl-5,6,7,8-tetrahydromethanopterin + methanofuran. It participates in one-carbon metabolism; formaldehyde degradation; formate from formaldehyde (H(4)MPT route): step 4/5. Catalyzes the transfer of a formyl group from 5-formyl tetrahydromethanopterin (5-formyl-H(4)MPT) to methanofuran (MFR) to produce formylmethanofuran (formyl-MFR) and tetrahydromethanopterin (H(4)MPT). The chain is Formylmethanofuran--tetrahydromethanopterin formyltransferase from Rhodopirellula baltica (strain DSM 10527 / NCIMB 13988 / SH1).